Consider the following 247-residue polypeptide: tRNA (guanine-N(1)-)-methyltransferase (247 aa).

S-adenosyl-L-methionine contacts are provided by residues G115 and 134–139 (IGDFVL).

Belongs to the RNA methyltransferase TrmD family. As to quaternary structure, homodimer.

Its subcellular location is the cytoplasm. It carries out the reaction guanosine(37) in tRNA + S-adenosyl-L-methionine = N(1)-methylguanosine(37) in tRNA + S-adenosyl-L-homocysteine + H(+). Its function is as follows. Specifically methylates guanosine-37 in various tRNAs. The polypeptide is tRNA (guanine-N(1)-)-methyltransferase (Anaeromyxobacter dehalogenans (strain 2CP-C)).